A 331-amino-acid polypeptide reads, in one-letter code: Adenosine deaminase (331 aa).

Residues His12 and His14 each contribute to the Zn(2+) site. Substrate-binding residues include His14, Asp16, and Gly170. His197 lines the Zn(2+) pocket. Catalysis depends on Glu200, which acts as the Proton donor. Asp278 contributes to the Zn(2+) binding site. Asp279 contacts substrate.

This sequence belongs to the metallo-dependent hydrolases superfamily. Adenosine and AMP deaminases family. Adenosine deaminase subfamily. The cofactor is Zn(2+).

It catalyses the reaction adenosine + H2O + H(+) = inosine + NH4(+). The enzyme catalyses 2'-deoxyadenosine + H2O + H(+) = 2'-deoxyinosine + NH4(+). Catalyzes the hydrolytic deamination of adenosine and 2-deoxyadenosine. This Shewanella putrefaciens (strain CN-32 / ATCC BAA-453) protein is Adenosine deaminase.